The chain runs to 390 residues: Succinate--CoA ligase [ADP-forming] subunit beta (390 aa).

The 240-residue stretch at 9–248 (KDILRKFGVT…TSEEDPFEVE (240 aa)) folds into the ATP-grasp domain. ATP is bound by residues K50, 57-59 (GRG), E103, M106, and E111. Residues N203 and D217 each contribute to the Mg(2+) site. Substrate is bound by residues N268 and 325–327 (GIV).

It belongs to the succinate/malate CoA ligase beta subunit family. Heterotetramer of two alpha and two beta subunits. Mg(2+) is required as a cofactor.

It catalyses the reaction succinate + ATP + CoA = succinyl-CoA + ADP + phosphate. The enzyme catalyses GTP + succinate + CoA = succinyl-CoA + GDP + phosphate. It functions in the pathway carbohydrate metabolism; tricarboxylic acid cycle; succinate from succinyl-CoA (ligase route): step 1/1. Functionally, succinyl-CoA synthetase functions in the citric acid cycle (TCA), coupling the hydrolysis of succinyl-CoA to the synthesis of either ATP or GTP and thus represents the only step of substrate-level phosphorylation in the TCA. The beta subunit provides nucleotide specificity of the enzyme and binds the substrate succinate, while the binding sites for coenzyme A and phosphate are found in the alpha subunit. In Chlorobium chlorochromatii (strain CaD3), this protein is Succinate--CoA ligase [ADP-forming] subunit beta.